Here is a 188-residue protein sequence, read N- to C-terminus: dCTP deaminase (188 aa).

Residues 111–116 (KSTYAR), 135–137 (TLE), glutamine 156, tyrosine 170, and glutamine 180 contribute to the dCTP site. Catalysis depends on glutamate 137, which acts as the Proton donor/acceptor.

Belongs to the dCTP deaminase family. As to quaternary structure, homotrimer.

It catalyses the reaction dCTP + H2O + H(+) = dUTP + NH4(+). It participates in pyrimidine metabolism; dUMP biosynthesis; dUMP from dCTP (dUTP route): step 1/2. In terms of biological role, catalyzes the deamination of dCTP to dUTP. This chain is dCTP deaminase, found in Pseudomonas aeruginosa (strain UCBPP-PA14).